The chain runs to 64 residues: Beta sliding clamp (64 aa).

It belongs to the beta sliding clamp family. In terms of assembly, forms a ring-shaped head-to-tail homodimer around DNA which binds and tethers DNA polymerases and other proteins to the DNA. The DNA replisome complex has a single clamp-loading complex (3 tau and 1 each of delta, delta', psi and chi subunits) which binds 3 Pol III cores (1 core on the leading strand and 2 on the lagging strand) each with a beta sliding clamp dimer. Additional proteins in the replisome are other copies of gamma, psi and chi, Ssb, DNA helicase and RNA primase.

The protein resides in the cytoplasm. In terms of biological role, confers DNA tethering and processivity to DNA polymerases and other proteins. Acts as a clamp, forming a ring around DNA (a reaction catalyzed by the clamp-loading complex) which diffuses in an ATP-independent manner freely and bidirectionally along dsDNA. Initially characterized for its ability to contact the catalytic subunit of DNA polymerase III (Pol III), a complex, multichain enzyme responsible for most of the replicative synthesis in bacteria; Pol III exhibits 3'-5' exonuclease proofreading activity. The beta chain is required for initiation of replication as well as for processivity of DNA replication. This chain is Beta sliding clamp (dnaN), found in Actinobacillus pleuropneumoniae (Haemophilus pleuropneumoniae).